The primary structure comprises 587 residues: Protein POF1B (587 aa).

Positions 331-529 (STFSNIREEL…EELSKLRQEI (199 aa)) form a coiled coil.

In terms of assembly, interacts with nonmuscle actin. In terms of tissue distribution, expression absent in adult ovary.

The protein localises to the cell junction. The protein resides in the tight junction. Its function is as follows. Plays a key role in the organization of epithelial monolayers by regulating the actin cytoskeleton. May be involved in ovary development. In Mus musculus (Mouse), this protein is Protein POF1B (Pof1b).